Consider the following 493-residue polypeptide: Polyamine aminopropyltransferase 2 (493 aa).

7 consecutive transmembrane segments (helical) span residues 9–29 (LCIF…ATLA), 32–52 (LLGN…LSMG), 68–88 (LAFV…VPIA), 101–121 (VIYG…PLAV), 137–157 (VLEK…YLFL), 161–181 (GLPL…FLLV), and 188–208 (KFLK…AVGH). The segment at 187 to 448 (KKFLKFLAIF…PLNFENFELK (262 aa)) is spermidine synthase. Residues 202 to 437 (ATYAVGHKRI…GEWGMVIGSK (236 aa)) form the PABS domain. Glutamine 233 contributes to the S-methyl-5'-thioadenosine binding site. Spermidine contacts are provided by histidine 263 and aspartate 287. S-methyl-5'-thioadenosine is bound by residues aspartate 306 and 340–341 (DA). Aspartate 358 (proton acceptor) is an active-site residue.

This sequence belongs to the spermidine/spermine synthase family. As to quaternary structure, homodimer or homotetramer.

The protein localises to the cell membrane. The enzyme catalyses S-adenosyl 3-(methylsulfanyl)propylamine + putrescine = S-methyl-5'-thioadenosine + spermidine + H(+). The protein operates within amine and polyamine biosynthesis; spermidine biosynthesis; spermidine from putrescine: step 1/1. In terms of biological role, catalyzes the irreversible transfer of a propylamine group from the amino donor S-adenosylmethioninamine (decarboxy-AdoMet) to putrescine (1,4-diaminobutane) to yield spermidine. In Aquifex aeolicus (strain VF5), this protein is Polyamine aminopropyltransferase 2.